We begin with the raw amino-acid sequence, 1080 residues long: Origin recognition complex subunit 3 (1080 aa).

Disordered regions lie at residues 92–112 (YGISKGDDDDDGDYVGGDDSS), 566–701 (TIKL…PKRI), and 869–902 (IKNEIKQQQQQQQQQQQQQQQQQHQQQQKIENEQ). A compositionally biased stretch (basic and acidic residues) spans 651–661 (IKSDLECNDND). Residues 662–671 (KDNDDNDNDI) are compositionally biased toward acidic residues. Low complexity-rich tracts occupy residues 672–688 (NENNNNINNNNNNNSNN) and 875–896 (QQQQQQQQQQQQQQQQQHQQQQ).

The protein belongs to the ORC3 family. As to quaternary structure, ORC is composed of six subunits.

The protein resides in the nucleus. Functionally, component of the origin recognition complex (ORC) that binds origins of replication. DNA-binding is ATP-dependent, however specific DNA sequences that define origins of replication have not been identified so far. ORC is required to assemble the pre-replication complex necessary to initiate DNA replication. The polypeptide is Origin recognition complex subunit 3 (orcC) (Dictyostelium discoideum (Social amoeba)).